The sequence spans 649 residues: Protein teflon (649 aa).

The C2H2-type 1 zinc finger occupies 33–56; the sequence is LYCHFCRDLFTQLPEFLRHLQSNH. The disordered stretch occupies residues 78-126; sequence EQGKAHEDAQSAGHNSSSGDSSSLMNSEDSRAIEGSEDNSDNSPMKPEQ. Over residues 88–104 the composition is skewed to low complexity; it reads SAGHNSSSGDSSSLMNS. C2H2-type zinc fingers lie at residues 599 to 621 and 625 to 648; these read YFCKCCDDIFILKKEYLKHLISH and FQCTKCIKVFKYKGYYEKHLRNAH.

The protein belongs to the Teflon family. In terms of tissue distribution, expressed at a low level in a variety of tissues, highest expression is in testis.

Its subcellular location is the nucleus. It localises to the chromosome. Specifically required in males for proper segregation of autosomal bivalents at meiosis I. Expression is required in the male germ line prior to spermatocyte stage S4. May have a role as a bridging molecule maintaining adhesion to hold autosome bivalents together via heterochromatic connections. This is Protein teflon from Drosophila melanogaster (Fruit fly).